A 236-amino-acid chain; its full sequence is MQTSIDPVFAGWDGSVAQARQLQQQLAQRVALRDEVSAAPALLAGFDVGFEDEGQTTRAAAVLLDAQTLLPLETHVARVPTSMPYVPGLLSFRELPALLRALALLSRTPDLVFIDGQGIAHPRRFGIAAHFGVVTGLPSIGVAKQRLAGTFIEPGGERGDHSPILLAGAQIGWALRSKPRCNPLIVSPGHRVSMQGALDWTLRTLRAYRLPEPTRLADRLASRRGEIELQTQPTLL.

Mg(2+) is bound by residues Asp-47 and Asp-115.

It belongs to the endonuclease V family. Mg(2+) serves as cofactor.

It is found in the cytoplasm. It catalyses the reaction Endonucleolytic cleavage at apurinic or apyrimidinic sites to products with a 5'-phosphate.. Functionally, DNA repair enzyme involved in the repair of deaminated bases. Selectively cleaves double-stranded DNA at the second phosphodiester bond 3' to a deoxyinosine leaving behind the intact lesion on the nicked DNA. The protein is Endonuclease V of Xanthomonas campestris pv. campestris (strain B100).